We begin with the raw amino-acid sequence, 109 residues long: uncharacterized protein (109 aa).

The tract at residues 67 to 96 (YFGNKLWRPTPRSGQSGQSRPKTGPHGSQR) is disordered. The span at 78-87 (RSGQSGQSRP) shows a compositional bias: polar residues.

This is an uncharacterized protein from Saccharomyces cerevisiae (strain ATCC 204508 / S288c) (Baker's yeast).